The following is a 168-amino-acid chain: Small ribosomal subunit protein uS5 (168 aa).

The S5 DRBM domain maps to 13–76; it reads IQEKLVAVRR…ENARRNMISV (64 aa).

It belongs to the universal ribosomal protein uS5 family. Part of the 30S ribosomal subunit. Contacts proteins S4 and S8.

Functionally, with S4 and S12 plays an important role in translational accuracy. Located at the back of the 30S subunit body where it stabilizes the conformation of the head with respect to the body. The protein is Small ribosomal subunit protein uS5 of Coxiella burnetii (strain RSA 493 / Nine Mile phase I).